A 34-amino-acid chain; its full sequence is Papillosin (34 aa).

Has strong antibacterial activity against the Gram-positive bacteria M.luteus, S.aureus, B.megaterium, A.viridans and E.faecalis, and against the Gram-negative bacteria K.pneumoniae, E.coli DH5alpha, S.typhimurium, P.aeruginosa and E.aerogenes. Lacks hemolytic activity against sheep erythrocytes. The polypeptide is Papillosin (Halocynthia papillosa (Red sea-squirt)).